We begin with the raw amino-acid sequence, 301 residues long: tRNA uridine(34) hydroxylase (301 aa).

One can recognise a Rhodanese domain in the interval 120-214 (SAPDVAVIDT…YLEDVPEDQS (95 aa)). The active-site Cysteine persulfide intermediate is C174.

The protein belongs to the TrhO family.

It catalyses the reaction uridine(34) in tRNA + AH2 + O2 = 5-hydroxyuridine(34) in tRNA + A + H2O. Functionally, catalyzes oxygen-dependent 5-hydroxyuridine (ho5U) modification at position 34 in tRNAs. This is tRNA uridine(34) hydroxylase from Jannaschia sp. (strain CCS1).